The chain runs to 1221 residues: Putative DNA-directed RNA polymerase II subunit RPB2 homolog (1221 aa).

Low complexity-rich tracts occupy residues 1–54 (MSRG…SASS) and 692–701 (PAPSSSPSDS). 2 disordered regions span residues 1–63 (MSRG…PMSE) and 673–701 (RGSG…PSDS). Asp823 is a Mg(2+) binding site. Positions 1174, 1177, 1187, and 1190 each coordinate Zn(2+). The segment at 1174–1190 (CKECGRISDHFEYCRMC) adopts a C4-type zinc-finger fold.

This sequence belongs to the RNA polymerase beta chain family.

The enzyme catalyses RNA(n) + a ribonucleoside 5'-triphosphate = RNA(n+1) + diphosphate. Its function is as follows. Component of the DNA-dependent RNA polymerase that catalyzes the transcription of DNA into RNA using the four ribonucleoside triphosphates as substrates. Second largest component of RNA polymerase II which synthesizes mRNA precursors and many functional non-coding RNAs. Proposed to contribute to the polymerase catalytic activity and forms the polymerase active center together with the largest subunit. In Dryophytes versicolor (chameleon treefrog), this protein is Putative DNA-directed RNA polymerase II subunit RPB2 homolog.